The chain runs to 235 residues: Pathogen-related protein (235 aa).

This is Pathogen-related protein from Hordeum vulgare (Barley).